We begin with the raw amino-acid sequence, 61 residues long: Metallothionein-2 (61 aa).

Position 1 is an N-acetylmethionine (methionine 1). The beta stretch occupies residues 1-29; it reads MDPNCSCAAGGSCTCAGSCKCKECRCTSC. Residues cysteine 5, cysteine 7, cysteine 13, cysteine 15, cysteine 19, cysteine 21, cysteine 24, cysteine 26, cysteine 29, cysteine 33, cysteine 34, cysteine 36, cysteine 37, cysteine 41, cysteine 44, cysteine 48, cysteine 50, and cysteine 57 each contribute to the a divalent metal cation site. Residues 30–61 are alpha; it reads KKSCCSCCPVGCAKCAQGCICKGASDKCSCCA. Position 58 is a phosphoserine (serine 58). A divalent metal cation is bound by residues cysteine 59 and cysteine 60.

It belongs to the metallothionein superfamily. Type 1 family. Interacts with EOLA1.

Metallothioneins have a high content of cysteine residues that bind various heavy metals; these proteins are transcriptionally regulated by both heavy metals and glucocorticoids. This is Metallothionein-2 (MT2A) from Canis lupus familiaris (Dog).